A 147-amino-acid chain; its full sequence is NADH-quinone oxidoreductase subunit A (147 aa).

3 helical membrane passes run Phe16–Phe36, Phe68–Trp88, and Val98–Val118.

Belongs to the complex I subunit 3 family. As to quaternary structure, NDH-1 is composed of 13 different subunits. Subunits NuoA, H, J, K, L, M, N constitute the membrane sector of the complex.

Its subcellular location is the cell inner membrane. The catalysed reaction is a quinone + NADH + 5 H(+)(in) = a quinol + NAD(+) + 4 H(+)(out). Functionally, NDH-1 shuttles electrons from NADH, via FMN and iron-sulfur (Fe-S) centers, to quinones in the respiratory chain. The immediate electron acceptor for the enzyme in this species is believed to be ubiquinone. Couples the redox reaction to proton translocation (for every two electrons transferred, four hydrogen ions are translocated across the cytoplasmic membrane), and thus conserves the redox energy in a proton gradient. The polypeptide is NADH-quinone oxidoreductase subunit A (Shigella boydii serotype 18 (strain CDC 3083-94 / BS512)).